The following is a 1343-amino-acid chain: DNA-directed RNA polymerase subunit beta (1343 aa).

The protein belongs to the RNA polymerase beta chain family. The RNAP catalytic core consists of 2 alpha, 1 beta, 1 beta' and 1 omega subunit. When a sigma factor is associated with the core the holoenzyme is formed, which can initiate transcription.

It catalyses the reaction RNA(n) + a ribonucleoside 5'-triphosphate = RNA(n+1) + diphosphate. Its function is as follows. DNA-dependent RNA polymerase catalyzes the transcription of DNA into RNA using the four ribonucleoside triphosphates as substrates. In Shewanella sp. (strain W3-18-1), this protein is DNA-directed RNA polymerase subunit beta.